A 276-amino-acid chain; its full sequence is Probable endonuclease 4 (276 aa).

Residues His-66, His-106, Glu-141, Asp-175, His-178, His-210, Asp-223, His-225, and Glu-255 each coordinate Zn(2+).

It belongs to the AP endonuclease 2 family. Zn(2+) serves as cofactor.

The catalysed reaction is Endonucleolytic cleavage to 5'-phosphooligonucleotide end-products.. In terms of biological role, endonuclease IV plays a role in DNA repair. It cleaves phosphodiester bonds at apurinic or apyrimidinic (AP) sites, generating a 3'-hydroxyl group and a 5'-terminal sugar phosphate. The polypeptide is Probable endonuclease 4 (Heliobacterium modesticaldum (strain ATCC 51547 / Ice1)).